The chain runs to 606 residues: Threonine dehydratase 1 biosynthetic, chloroplastic (606 aa).

Lys-154 bears the N6-(pyridoxal phosphate)lysine mark. 2 ACT-like domains span residues 432–504 (AVLA…NLTD) and 526–597 (LLCR…MESL).

Belongs to the serine/threonine dehydratase family. Pyridoxal 5'-phosphate serves as cofactor. In terms of tissue distribution, expressed constitutively in all tissues examined including root, stem, petiole, leaf, immature flower bud, unopened flower and opened flower with the highest expression in opened flower and lowest in leaf.

The protein localises to the plastid. Its subcellular location is the chloroplast. The catalysed reaction is L-threonine = 2-oxobutanoate + NH4(+). It functions in the pathway amino-acid biosynthesis; L-isoleucine biosynthesis; 2-oxobutanoate from L-threonine: step 1/1. Its activity is regulated as follows. Strongly inhibited by 1 mM isoleucine. Functionally, has a housekeeping role in isoleucine biosynthesis. This chain is Threonine dehydratase 1 biosynthetic, chloroplastic, found in Solanum lycopersicum (Tomato).